Here is a 464-residue protein sequence, read N- to C-terminus: ATP synthase subunit beta (464 aa).

ATP is bound at residue 148-155 (GGAGVGKT).

Belongs to the ATPase alpha/beta chains family. As to quaternary structure, F-type ATPases have 2 components, CF(1) - the catalytic core - and CF(0) - the membrane proton channel. CF(1) has five subunits: alpha(3), beta(3), gamma(1), delta(1), epsilon(1). CF(0) has three main subunits: a(1), b(2) and c(9-12). The alpha and beta chains form an alternating ring which encloses part of the gamma chain. CF(1) is attached to CF(0) by a central stalk formed by the gamma and epsilon chains, while a peripheral stalk is formed by the delta and b chains.

It localises to the cell inner membrane. The enzyme catalyses ATP + H2O + 4 H(+)(in) = ADP + phosphate + 5 H(+)(out). In terms of biological role, produces ATP from ADP in the presence of a proton gradient across the membrane. The catalytic sites are hosted primarily by the beta subunits. In Marinobacter nauticus (strain ATCC 700491 / DSM 11845 / VT8) (Marinobacter aquaeolei), this protein is ATP synthase subunit beta.